The sequence spans 256 residues: Protein TV0584 (256 aa).

This sequence belongs to the CinA family.

The polypeptide is Protein TV0584 (Thermoplasma volcanium (strain ATCC 51530 / DSM 4299 / JCM 9571 / NBRC 15438 / GSS1)).